A 37-amino-acid chain; its full sequence is Large ribosomal subunit protein bL36 (37 aa).

This sequence belongs to the bacterial ribosomal protein bL36 family.

This Ureaplasma parvum serovar 3 (strain ATCC 27815 / 27 / NCTC 11736) protein is Large ribosomal subunit protein bL36.